The following is a 392-amino-acid chain: GDSL esterase/lipase ESM1 (392 aa).

Positions 1–28 (MADNLNLVSVLGVLLVLTIFHNPIIVYA) are cleaved as a signal peptide. Ser43 functions as the Nucleophile in the catalytic mechanism. 3 N-linked (GlcNAc...) asparagine glycosylation sites follow: Asn146, Asn166, and Asn290. Catalysis depends on residues Asp324 and His327.

The protein belongs to the 'GDSL' lipolytic enzyme family.

It localises to the secreted. In terms of biological role, represses or inhibits nitriles production from methionine-derived and from indol-3-ylmethyl glucosinolates. Favors isothiocyanate production. The chain is GDSL esterase/lipase ESM1 (ESM1) from Arabidopsis thaliana (Mouse-ear cress).